The primary structure comprises 533 residues: DELLA protein 2 (533 aa).

Basic and acidic residues predominate over residues 1–12 (MKREHKLEHEDM). Residues 1–24 (MKREHKLEHEDMSSGSGKSGVCWE) are disordered. The DELLA motif signature appears at 31–35 (DELLA). The 366-residue stretch at 157–522 (VETQEKGIRL…RPLIATSAWK (366 aa)) folds into the GRAS domain. The tract at residues 164 to 218 (IRLVHSLMACAEAVEQNNLKMAEALVKQIGYLAVSQEGAMRKVATYFAEGLARRI) is leucine repeat I (LRI). Residues 166–203 (LVHSLMACAEAVEQNNLKMAEALVKQIGYLAVSQEGAM) form a required for possible homodimerization region. Residues 171-175 (MACAE) carry the LxCxE motif; degenerate motif. Residues 232–297 (QIHFYETCPN…GGPPAFRLTG (66 aa)) are VHIID. The VHIID signature appears at 263–267 (VHVID). Positions 311 to 343 (QVGWRLAQFAQTIHVQFEYRGFVANSLADLDAS) are leucine repeat II (LRII). The interval 355-443 (VAVNSVFELH…EVYLGKQICN (89 aa)) is PFYRE. Residues 363–367 (LHKLN) carry the LXXLL motif; degenerate motif. Residues 446–522 (ACEGTDRVER…RPLIATSAWK (77 aa)) form an SAW region.

The protein belongs to the GRAS family. DELLA subfamily. In terms of assembly, may be a homodimer. In terms of processing, ubiquitinated. Upon GA application it is ubiquitinated, leading to its subsequent degradation.

The protein localises to the nucleus. Probable transcriptional regulator that acts as a repressor of the gibberellin (GA) signaling pathway. Probably acts by participating in large multiprotein complexes that repress transcription of GA-inducible genes. Upon GA application, it is degraded by the proteasome, allowing the GA signaling pathway. Together with DELLA1, required to enable arbuscule development during arbuscular mycorrhizal (AM) symbiosis with AM fungi (e.g. Glomus versiforme) via the regulation of RAM1 which, in turn, regulates various AM genes (e.g. NSP1, NSP2, PT4, LEC5, RAM2, EXO70I, STR and RAD1). The protein is DELLA protein 2 of Medicago truncatula (Barrel medic).